Reading from the N-terminus, the 207-residue chain is SPRY domain-containing protein 4 (207 aa).

The 196-residue stretch at 12–207 (YRWGTKRWGV…HSGLEVPKGL (196 aa)) folds into the B30.2/SPRY domain. N6-acetyllysine is present on residues K53 and K130. K139 is modified (N6-succinyllysine).

The polypeptide is SPRY domain-containing protein 4 (Spryd4) (Rattus norvegicus (Rat)).